The following is a 337-amino-acid chain: S-adenosylmethionine:tRNA ribosyltransferase-isomerase (337 aa).

The protein belongs to the QueA family. Monomer.

The protein localises to the cytoplasm. The enzyme catalyses 7-aminomethyl-7-carbaguanosine(34) in tRNA + S-adenosyl-L-methionine = epoxyqueuosine(34) in tRNA + adenine + L-methionine + 2 H(+). Its pathway is tRNA modification; tRNA-queuosine biosynthesis. Transfers and isomerizes the ribose moiety from AdoMet to the 7-aminomethyl group of 7-deazaguanine (preQ1-tRNA) to give epoxyqueuosine (oQ-tRNA). The chain is S-adenosylmethionine:tRNA ribosyltransferase-isomerase from Legionella pneumophila subsp. pneumophila (strain Philadelphia 1 / ATCC 33152 / DSM 7513).